The primary structure comprises 347 residues: Cell shape-determining protein MreB (347 aa).

Residues 19-21 (TAN), 165-167 (GGT), 213-216 (ERIK), and 295-298 (GGAL) each bind ATP.

The protein belongs to the FtsA/MreB family. In terms of assembly, forms polymers in the presence of ATP. Forms pairs of protofilaments that adopt an antiparallel arrangement and bind to lipids.

Its subcellular location is the cytoplasm. Functionally, forms membrane-associated dynamic filaments that are essential for cell shape determination. Acts by regulating cell wall synthesis and cell elongation, and thus cell shape. A feedback loop between cell geometry and MreB localization may maintain elongated cell shape by targeting cell wall growth to regions of negative cell wall curvature. Required for mid-cell peptidoglycan synthesis and cell division. Directs the localization of the cytosolic peptidoglycan precursor-synthesizing enzyme MurG. Also required for proper chromosome segregation. Directs the segregation of origin-proximal but not origin-distal loci. This Caulobacter vibrioides (strain NA1000 / CB15N) (Caulobacter crescentus) protein is Cell shape-determining protein MreB.